A 62-amino-acid polypeptide reads, in one-letter code: Large ribosomal subunit protein uL30 (62 aa).

It belongs to the universal ribosomal protein uL30 family. Part of the 50S ribosomal subunit.

The protein is Large ribosomal subunit protein uL30 of Geobacillus thermodenitrificans (strain NG80-2).